Here is a 376-residue protein sequence, read N- to C-terminus: Response regulator aspartate phosphatase H (376 aa).

TPR repeat units follow at residues 99 to 132 (YYSL…LPFV), 139 to 172 (AEFH…YQNH), 180 to 213 (IQSL…AMDI), 220 to 253 (AISL…SREK), 259 to 292 (PKVL…ITAR), and 334 to 367 (EACA…QEDI).

This sequence belongs to the Rap family. Homodimer. Interacts with phosphorylated Spo0F. Each RapH protomer is bound to a monomer of Spo0F, forming a heterotetrameric complex. May also interact with non-phosphorylated Spo0F to inhibit the sporulation phosphorelay. Interacts with the C-terminal DNA-binding region of ComA. Does not interact with DegU.

It is found in the cytoplasm. Both activities are inhibited by RapH. Its function is as follows. Dual specificity regulatory protein that can control both sporulation and competence by acting on two distinct response regulators: Spo0F and ComA, respectively. Is involved in the temporal separation of competence and sporulation. Acts as a phosphatase that specifically dephosphorylates the sporulation initiation phosphotransferase Spo0F and inhibits its activity. RapH can also antagonize sporulation by sterically blocking phosphoryl transfer to and from Spo0F. In addition, inhibits the activity of ComA, a transcriptional factor that regulates the development of genetic competence. Acts by binding to ComA, leading to the inhibition of its DNA-binding activity. This is Response regulator aspartate phosphatase H (rapH) from Bacillus subtilis (strain 168).